The chain runs to 147 residues: Peptide methionine sulfoxide reductase MsrB (147 aa).

The MsrB domain maps to 25–147; sequence DEYWREHLTE…NSVSLIFNKK (123 aa). The Zn(2+) site is built by C64, C67, C113, and C116. Catalysis depends on C136, which acts as the Nucleophile.

Belongs to the MsrB Met sulfoxide reductase family. It depends on Zn(2+) as a cofactor.

It catalyses the reaction L-methionyl-[protein] + [thioredoxin]-disulfide + H2O = L-methionyl-(R)-S-oxide-[protein] + [thioredoxin]-dithiol. The chain is Peptide methionine sulfoxide reductase MsrB from Vibrio cholerae serotype O1 (strain ATCC 39541 / Classical Ogawa 395 / O395).